We begin with the raw amino-acid sequence, 21 residues long: Fibrinogen beta chain (21 aa).

Pyrrolidone carboxylic acid is present on Gln1. The span at 1 to 11 (QHSTDYDEEEE) shows a compositional bias: acidic residues. A disordered region spans residues 1 to 21 (QHSTDYDEEEEDRAKLHLDAR). A glycan (O-linked (GalNAc...) threonine) is linked at Thr4. Tyr6 is modified (sulfotyrosine). A compositionally biased stretch (basic and acidic residues) spans 12–21 (DRAKLHLDAR).

In terms of assembly, heterohexamer; disulfide linked. Contains 2 sets of 3 non-identical chains (alpha, beta and gamma). The 2 heterotrimers are in head to head conformation with the N-termini in a small central domain. In terms of processing, conversion of fibrinogen to fibrin is triggered by thrombin, which cleaves fibrinopeptides A and B from alpha and beta chains, and thus exposes the N-terminal polymerization sites responsible for the formation of the soft clot.

It is found in the secreted. Its function is as follows. Cleaved by the protease thrombin to yield monomers which, together with fibrinogen alpha (FGA) and fibrinogen gamma (FGG), polymerize to form an insoluble fibrin matrix. Fibrin has a major function in hemostasis as one of the primary components of blood clots. In addition, functions during the early stages of wound repair to stabilize the lesion and guide cell migration during re-epithelialization. Was originally thought to be essential for platelet aggregation, based on in vitro studies using anticoagulated blood. However subsequent studies have shown that it is not absolutely required for thrombus formation in vivo. Enhances expression of SELP in activated platelets. Maternal fibrinogen is essential for successful pregnancy. Fibrin deposition is also associated with infection, where it protects against IFNG-mediated hemorrhage. May also facilitate the antibacterial immune response via both innate and T-cell mediated pathways. In Cervus elaphus (Red deer), this protein is Fibrinogen beta chain (FGB).